The primary structure comprises 250 residues: Probable transcriptional regulatory protein PERMA_0079 (250 aa).

This sequence belongs to the TACO1 family.

It is found in the cytoplasm. This chain is Probable transcriptional regulatory protein PERMA_0079, found in Persephonella marina (strain DSM 14350 / EX-H1).